The chain runs to 266 residues: Energy-coupling factor transporter ATP-binding protein EcfA1 (266 aa).

The ABC transporter domain maps to 2 to 237 (IKLNNVTFRY…EKIIEIAKIA (236 aa)). 37–44 (GHNGSGKS) lines the ATP pocket.

The protein belongs to the ABC transporter superfamily. Energy-coupling factor EcfA family. As to quaternary structure, forms a stable energy-coupling factor (ECF) transporter complex composed of 2 membrane-embedded substrate-binding proteins (S component), 2 ATP-binding proteins (A component) and 2 transmembrane proteins (T component).

The protein resides in the cell membrane. In terms of biological role, ATP-binding (A) component of a common energy-coupling factor (ECF) ABC-transporter complex. Unlike classic ABC transporters this ECF transporter provides the energy necessary to transport a number of different substrates. The sequence is that of Energy-coupling factor transporter ATP-binding protein EcfA1 from Mycoplasmopsis synoviae (strain 53) (Mycoplasma synoviae).